A 323-amino-acid chain; its full sequence is ATP synthase gamma chain (323 aa).

The protein belongs to the ATPase gamma chain family. In terms of assembly, F-type ATPases have 2 components, CF(1) - the catalytic core - and CF(0) - the membrane proton channel. CF(1) has five subunits: alpha(3), beta(3), gamma(1), delta(1), epsilon(1). CF(0) has three main subunits: a, b and c.

It is found in the cell inner membrane. Its function is as follows. Produces ATP from ADP in the presence of a proton gradient across the membrane. The gamma chain is believed to be important in regulating ATPase activity and the flow of protons through the CF(0) complex. This is ATP synthase gamma chain from Rickettsia africae (strain ESF-5).